We begin with the raw amino-acid sequence, 892 residues long: Bifunctional uridylyltransferase/uridylyl-removing enzyme (892 aa).

Residues 1–348 form a uridylyltransferase region; it reads MPNFTGNTRP…LVDAKVHVRP (348 aa). The interval 349–710 is uridylyl-removing; it reads INERFQARNG…RIHNQEPGTM (362 aa). The HD domain maps to 467-589; sequence VDEHTLFLIH…VGDERRLNHL (123 aa). ACT domains follow at residues 711–786 and 822–892; these read EVFI…LTQP and VMEL…YLER.

Belongs to the GlnD family. Requires Mg(2+) as cofactor.

It carries out the reaction [protein-PII]-L-tyrosine + UTP = [protein-PII]-uridylyl-L-tyrosine + diphosphate. The catalysed reaction is [protein-PII]-uridylyl-L-tyrosine + H2O = [protein-PII]-L-tyrosine + UMP + H(+). With respect to regulation, uridylyltransferase (UTase) activity is inhibited by glutamine, while glutamine activates uridylyl-removing (UR) activity. Modifies, by uridylylation and deuridylylation, the PII regulatory proteins (GlnB and homologs), in response to the nitrogen status of the cell that GlnD senses through the glutamine level. Under low glutamine levels, catalyzes the conversion of the PII proteins and UTP to PII-UMP and PPi, while under higher glutamine levels, GlnD hydrolyzes PII-UMP to PII and UMP (deuridylylation). Thus, controls uridylylation state and activity of the PII proteins, and plays an important role in the regulation of nitrogen assimilation and metabolism. This chain is Bifunctional uridylyltransferase/uridylyl-removing enzyme, found in Nitrosococcus oceani (strain ATCC 19707 / BCRC 17464 / JCM 30415 / NCIMB 11848 / C-107).